A 186-amino-acid polypeptide reads, in one-letter code: Threonylcarbamoyl-AMP synthase (186 aa).

Residues 5-186 (TQSINDAVKC…DAITGEILRL (182 aa)) enclose the YrdC-like domain.

Belongs to the SUA5 family. TsaC subfamily.

It localises to the cytoplasm. The catalysed reaction is L-threonine + hydrogencarbonate + ATP = L-threonylcarbamoyladenylate + diphosphate + H2O. Its function is as follows. Required for the formation of a threonylcarbamoyl group on adenosine at position 37 (t(6)A37) in tRNAs that read codons beginning with adenine. Catalyzes the conversion of L-threonine, HCO(3)(-)/CO(2) and ATP to give threonylcarbamoyl-AMP (TC-AMP) as the acyladenylate intermediate, with the release of diphosphate. The sequence is that of Threonylcarbamoyl-AMP synthase from Coxiella burnetii (strain RSA 331 / Henzerling II).